The chain runs to 196 residues: Superoxide dismutase [Fe] (196 aa).

Residues histidine 20, histidine 68, aspartate 157, and histidine 161 each coordinate Fe cation.

This sequence belongs to the iron/manganese superoxide dismutase family. Homotetramer. Requires Fe cation as cofactor.

It catalyses the reaction 2 superoxide + 2 H(+) = H2O2 + O2. Destroys superoxide anion radicals which are normally produced within the cells and which are toxic to biological systems. In Tetrahymena pyriformis, this protein is Superoxide dismutase [Fe].